A 310-amino-acid polypeptide reads, in one-letter code: Protein translocase subunit SecF (310 aa).

Transmembrane regions (helical) follow at residues 18–38, 135–155, 162–182, 188–208, 240–260, and 267–287; these read FFTISGLLLLLTVGAFIYRGG, QAVYAFLFAFLVMIVYVAFRF, IVSVVGIIHDIVISLGFVILA, ITIVAALLTVVGYSINDTIVL, IVTSLTVFIVACSLFFFGGEV, and IMIIGTVLGVFSTIFVCAPLI.

The protein belongs to the SecD/SecF family. SecF subfamily. Forms a complex with SecD. Part of the essential Sec protein translocation apparatus which comprises SecA, SecYEG and auxiliary proteins SecDF. Other proteins may also be involved.

It is found in the cell inner membrane. Functionally, part of the Sec protein translocase complex. Interacts with the SecYEG preprotein conducting channel. SecDF uses the proton motive force (PMF) to complete protein translocation after the ATP-dependent function of SecA. The chain is Protein translocase subunit SecF from Endomicrobium trichonymphae.